The following is a 910-amino-acid chain: Valine--tRNA ligase (910 aa).

Residues 45 to 55 carry the 'HIGH' region motif; sequence PNVTGSLHMGH. A 'KMSKS' region motif is present at residues 554 to 558; the sequence is KMSKS. Residue K557 coordinates ATP. The stretch at 842–910 forms a coiled coil; that stretch reads DLQAEAARLA…TAESRIRDAS (69 aa).

The protein belongs to the class-I aminoacyl-tRNA synthetase family. ValS type 1 subfamily. Monomer.

It is found in the cytoplasm. It catalyses the reaction tRNA(Val) + L-valine + ATP = L-valyl-tRNA(Val) + AMP + diphosphate. In terms of biological role, catalyzes the attachment of valine to tRNA(Val). As ValRS can inadvertently accommodate and process structurally similar amino acids such as threonine, to avoid such errors, it has a 'posttransfer' editing activity that hydrolyzes mischarged Thr-tRNA(Val) in a tRNA-dependent manner. In Brucella melitensis biotype 1 (strain ATCC 23456 / CCUG 17765 / NCTC 10094 / 16M), this protein is Valine--tRNA ligase.